A 300-amino-acid chain; its full sequence is Ribosomal protein L11 methyltransferase (300 aa).

The S-adenosyl-L-methionine site is built by threonine 148, glycine 171, aspartate 193, and asparagine 235.

The protein belongs to the methyltransferase superfamily. PrmA family.

It is found in the cytoplasm. It catalyses the reaction L-lysyl-[protein] + 3 S-adenosyl-L-methionine = N(6),N(6),N(6)-trimethyl-L-lysyl-[protein] + 3 S-adenosyl-L-homocysteine + 3 H(+). Functionally, methylates ribosomal protein L11. The polypeptide is Ribosomal protein L11 methyltransferase (Desulfotalea psychrophila (strain LSv54 / DSM 12343)).